Here is a 147-residue protein sequence, read N- to C-terminus: Transcription elongation factor Spt5 (147 aa).

In terms of domain architecture, KOW spans 91-122 (KGDVVEIIAGPFKGERAKVIRVDKHKEEVTLE).

Belongs to the archaeal Spt5 family. As to quaternary structure, heterodimer composed of Spt4 and Spt5. Interacts with RNA polymerase (RNAP). Forms a homodimer in solution.

Its function is as follows. Stimulates transcription elongation. This is Transcription elongation factor Spt5 from Methanocaldococcus jannaschii (strain ATCC 43067 / DSM 2661 / JAL-1 / JCM 10045 / NBRC 100440) (Methanococcus jannaschii).